A 171-amino-acid chain; its full sequence is Lipoprotein signal peptidase (171 aa).

A run of 3 helical transmembrane segments spans residues 7-27 (GLIALLATLALDQASKLWLYF), 64-84 (LGRWLLVAVSLAAVIGLSVWM), and 88-108 (GSRLLAVALGLIVGGALGNAI). Catalysis depends on residues Asp118 and Asp136. Residues 128-148 (SWYVFNVADAAIVAGVVGLIL) traverse the membrane as a helical segment.

Belongs to the peptidase A8 family.

The protein resides in the cell inner membrane. It carries out the reaction Release of signal peptides from bacterial membrane prolipoproteins. Hydrolyzes -Xaa-Yaa-Zaa-|-(S,diacylglyceryl)Cys-, in which Xaa is hydrophobic (preferably Leu), and Yaa (Ala or Ser) and Zaa (Gly or Ala) have small, neutral side chains.. Its pathway is protein modification; lipoprotein biosynthesis (signal peptide cleavage). In terms of biological role, this protein specifically catalyzes the removal of signal peptides from prolipoproteins. The chain is Lipoprotein signal peptidase from Methylorubrum extorquens (strain PA1) (Methylobacterium extorquens).